The sequence spans 342 residues: 4-hydroxy-2-oxovalerate aldolase (342 aa).

A Pyruvate carboxyltransferase domain is found at 8-260; sequence ITVHDMTLRD…ATGVDLFKMQ (253 aa). 16-17 is a binding site for substrate; sequence RD. Asp-17 is a Mn(2+) binding site. The Proton acceptor role is filled by His-20. The substrate site is built by Ser-170 and His-199. His-199 and His-201 together coordinate Mn(2+). Tyr-290 lines the substrate pocket.

This sequence belongs to the 4-hydroxy-2-oxovalerate aldolase family.

It catalyses the reaction (S)-4-hydroxy-2-oxopentanoate = acetaldehyde + pyruvate. The sequence is that of 4-hydroxy-2-oxovalerate aldolase from Albidiferax ferrireducens (strain ATCC BAA-621 / DSM 15236 / T118) (Rhodoferax ferrireducens).